Consider the following 205-residue polypeptide: ATP phosphoribosyltransferase (205 aa).

This sequence belongs to the ATP phosphoribosyltransferase family. Short subfamily. Heteromultimer composed of HisG and HisZ subunits.

It is found in the cytoplasm. The catalysed reaction is 1-(5-phospho-beta-D-ribosyl)-ATP + diphosphate = 5-phospho-alpha-D-ribose 1-diphosphate + ATP. It functions in the pathway amino-acid biosynthesis; L-histidine biosynthesis; L-histidine from 5-phospho-alpha-D-ribose 1-diphosphate: step 1/9. In terms of biological role, catalyzes the condensation of ATP and 5-phosphoribose 1-diphosphate to form N'-(5'-phosphoribosyl)-ATP (PR-ATP). Has a crucial role in the pathway because the rate of histidine biosynthesis seems to be controlled primarily by regulation of HisG enzymatic activity. This is ATP phosphoribosyltransferase from Helicobacter hepaticus (strain ATCC 51449 / 3B1).